The primary structure comprises 91 residues: UPF0213 protein NMA2126 (91 aa).

In terms of domain architecture, GIY-YIG spans 4 to 83 (SNWSLYLILC…AAQKRKLWEQ (80 aa)).

It belongs to the UPF0213 family.

The sequence is that of UPF0213 protein NMA2126 from Neisseria meningitidis serogroup A / serotype 4A (strain DSM 15465 / Z2491).